The sequence spans 732 residues: Elongation factor 2 (732 aa).

The 242-residue stretch at 19–260 (ERIRNIGIAA…MVVRHLPSPI (242 aa)) folds into the tr-type G domain. GTP is bound by residues 28–35 (AHIDHGKT), 94–98 (DTPGH), and 148–151 (NKVD). At His-597 the chain carries Diphthamide.

Belongs to the TRAFAC class translation factor GTPase superfamily. Classic translation factor GTPase family. EF-G/EF-2 subfamily.

It localises to the cytoplasm. Functionally, catalyzes the GTP-dependent ribosomal translocation step during translation elongation. During this step, the ribosome changes from the pre-translocational (PRE) to the post-translocational (POST) state as the newly formed A-site-bound peptidyl-tRNA and P-site-bound deacylated tRNA move to the P and E sites, respectively. Catalyzes the coordinated movement of the two tRNA molecules, the mRNA and conformational changes in the ribosome. This is Elongation factor 2 (fusA) from Pyrococcus horikoshii (strain ATCC 700860 / DSM 12428 / JCM 9974 / NBRC 100139 / OT-3).